Consider the following 1210-residue polypeptide: Inner capsid protein VP3 (1210 aa).

The interval 1–28 (MPRTSRNVRATEVATTAIPPSNAATDTT) is disordered. The C2H2-type zinc-finger motif lies at 113–136 (LRCQQCGAKFSSMTQLAEHVRTEH). The segment at 294 to 319 (PHAGPQVRSVQSQDQQVYSVDSGPDP) is disordered. Over residues 299–315 (QVRSVQSQDQQVYSVDS) the composition is skewed to low complexity.

It belongs to the turreted BTV-fold inner capsid family. Homodecamer; each decamer is made up of two conformers of VP2, called VP2A and VP2B. 12 homodecamers assemble to form an icosahedral capsid. Interacts with VP6.

It is found in the virion. In terms of biological role, inner capsid protein that self-assembles to form an icosahedral capsid with a T=2 symmetry, which consists of 120 copies of VP2, with channels at each of its five-fold vertices. This capsid constitutes the innermost concentric layer of the viral mature particle. The protein is Inner capsid protein VP3 (S3) of Aquareovirus A (isolate Chum salmon/Japan/CSRV/1981) (AQRV-A).